We begin with the raw amino-acid sequence, 490 residues long: Hexokinase (490 aa).

Residues 21-466 (QNLLEHIKHF…SGVGAALIAA (446 aa)) enclose the Hexokinase domain. The tract at residues 75 to 209 (DGKETGTFLA…GLPIKVAALI (135 aa)) is hexokinase small subdomain. The tract at residues 210–455 (NDTTGTLIAS…DKVTIHAAED (246 aa)) is hexokinase large subdomain.

The protein belongs to the hexokinase family. Monomer.

It carries out the reaction a D-hexose + ATP = a D-hexose 6-phosphate + ADP + H(+). The catalysed reaction is D-fructose + ATP = D-fructose 6-phosphate + ADP + H(+). The enzyme catalyses D-glucose + ATP = D-glucose 6-phosphate + ADP + H(+). It functions in the pathway carbohydrate metabolism; hexose metabolism. Its pathway is carbohydrate degradation; glycolysis; D-glyceraldehyde 3-phosphate and glycerone phosphate from D-glucose: step 1/4. Functionally, catalyzes the phosphorylation of hexose, such as D-glucose and D-fructose, to hexose 6-phosphate (D-glucose 6-phosphate and D-fructose 6-phosphate, respectively). Mediates the initial step of glycolysis by catalyzing phosphorylation of D-glucose to D-glucose 6-phosphate. This chain is Hexokinase (hxkA), found in Emericella nidulans (strain FGSC A4 / ATCC 38163 / CBS 112.46 / NRRL 194 / M139) (Aspergillus nidulans).